A 620-amino-acid chain; its full sequence is Chaperone protein HscA homolog (620 aa).

It belongs to the heat shock protein 70 family.

In terms of biological role, chaperone involved in the maturation of iron-sulfur cluster-containing proteins. Has a low intrinsic ATPase activity which is markedly stimulated by HscB. This is Chaperone protein HscA homolog from Shewanella piezotolerans (strain WP3 / JCM 13877).